A 344-amino-acid chain; its full sequence is Serine/threonine-protein kinase ppk13 (344 aa).

Residues 38–46 (LGEGGFAFV) and Lys61 each bind ATP. Residues 76–344 (MKEADYHRKF…LSKIDLQINQ (269 aa)) enclose the Protein kinase domain. The Proton acceptor role is filled by His192.

It belongs to the protein kinase superfamily. Ser/Thr protein kinase family.

The protein localises to the endoplasmic reticulum. It is found in the golgi apparatus. The catalysed reaction is L-seryl-[protein] + ATP = O-phospho-L-seryl-[protein] + ADP + H(+). The enzyme catalyses L-threonyl-[protein] + ATP = O-phospho-L-threonyl-[protein] + ADP + H(+). This is Serine/threonine-protein kinase ppk13 (ppk13) from Schizosaccharomyces pombe (strain 972 / ATCC 24843) (Fission yeast).